A 20-amino-acid polypeptide reads, in one-letter code: Hemocyanin subunit II (20 aa).

The interval aspartate 1–lysine 20 is disordered. The segment covering lysine 10–lysine 20 has biased composition (basic and acidic residues).

The protein belongs to the tyrosinase family. Hemocyanin subfamily. In terms of assembly, composed of 3 major subunits (IB, II and III) and 1 minor subunit (IA) which form homohexamers and heterohexamers. May also form larger structures. In terms of tissue distribution, hemolymph.

The protein localises to the secreted. Its subcellular location is the extracellular space. In terms of biological role, hemocyanins are copper-containing oxygen carriers occurring freely dissolved in the hemolymph of many mollusks and arthropods. The protein is Hemocyanin subunit II of Panulirus japonicus (Japanese spiny lobster).